Here is a 207-residue protein sequence, read N- to C-terminus: Redox-sensing transcriptional repressor Rex (207 aa).

Residues 15-54 constitute a DNA-binding region (H-T-H motif); that stretch reads LYYRCLNRLYEEGIEYVASKDIAERLGIKSSQVRKDLSYF. An NAD(+)-binding site is contributed by 89 to 94; that stretch reads GAGNIG.

Belongs to the transcriptional regulatory Rex family. As to quaternary structure, homodimer.

It is found in the cytoplasm. Modulates transcription in response to changes in cellular NADH/NAD(+) redox state. This chain is Redox-sensing transcriptional repressor Rex, found in Thermosipho africanus (strain TCF52B).